The sequence spans 526 residues: Carotenoid cleavage oxygenase 1 (526 aa).

Positions 1–33 (MAEYVFSDAPKDSHGNGVKDAVPGKQPEELPPA) are disordered. Residues Tyr133 and Lys164 each contribute to the piceatannol site. Residues Tyr133 and Lys164 each coordinate trans-resveratrol. Positions 197, 248, and 313 each coordinate Fe cation. Glu383 serves as a coordination point for piceatannol. A trans-resveratrol-binding site is contributed by Glu383. His510 is a Fe cation binding site.

This sequence belongs to the carotenoid oxygenase family. It depends on Fe(2+) as a cofactor.

It carries out the reaction trans-resveratrol + O2 = 3,5-dihydroxybenzaldehyde + 4-hydroxybenzaldehyde. The catalysed reaction is piceatannol + O2 = 3,5-dihydroxybenzaldehyde + 3,4-dihydroxybenzaldehyde. Dioxygenase that cleaves the interphenyl C-alpha-C-beta double bond of resveratrol to yield 3,5-dihydroxybenzaldehyde and 4-hydroxybenzaldehyde. Also cleaves piceatannol, a compound that differs from resveratrol only in the occurrence of an additional hydroxyl group, which leads to the production of 3,4-dihydroxybenzaldehyde and 3,5-hydroxybenzaldehyde. Is not able to cleave trans-stilbene, 4-monohydroxy-trans-stilbene, 3,5-dihydroxy-trans-stilbene (pinosylvin), trismethoxy-resveratrol, and 3,3',5-trihydroxy-4'-methoxystilbene-3-O-beta-D-glucoside. Is not involved in carotenoid metabolism. The chain is Carotenoid cleavage oxygenase 1 from Neurospora crassa (strain ATCC 24698 / 74-OR23-1A / CBS 708.71 / DSM 1257 / FGSC 987).